The primary structure comprises 643 residues: SURP and G-patch domain-containing protein 1 (643 aa).

Disordered regions lie at residues 48-69 (ARME…HPGE) and 97-119 (KAQT…SSLK). A Phosphothreonine modification is found at threonine 128. An SURP motif 1 repeat occupies 187-229 (VIEKLARFVAEGGPELEKVAMEDYKDNPAFTFLHDKNSREFLY). Position 252 is a phosphoserine (serine 252). The stretch at 262–305 (LAEKLARFIADGGPEVETIALQNNRENQAFSFLYDPNSQGYRYY) is one SURP motif 2 repeat. 2 disordered regions span residues 316 to 335 (KAGS…LRRK) and 360 to 393 (AVNP…DKVE). A Phosphoserine modification is found at serine 322. Positions 378-384 (KRKRKSR) match the Nuclear localization signal motif. A phosphoserine mark is found at serine 407, serine 409, serine 412, and serine 483. Residues 560-607 (VENIGYQMLMKMGWKEGEGLGTEGQGIKNPVNKGATTIDGAGFGIDRP) form the G-patch domain.

In terms of assembly, component of the spliceosome.

Its subcellular location is the nucleus. Functionally, plays a role in pre-mRNA splicing. The protein is SURP and G-patch domain-containing protein 1 (Sugp1) of Mus musculus (Mouse).